We begin with the raw amino-acid sequence, 466 residues long: Asparagine--tRNA ligase (466 aa).

This sequence belongs to the class-II aminoacyl-tRNA synthetase family. As to quaternary structure, homodimer.

The protein resides in the cytoplasm. The enzyme catalyses tRNA(Asn) + L-asparagine + ATP = L-asparaginyl-tRNA(Asn) + AMP + diphosphate + H(+). The sequence is that of Asparagine--tRNA ligase from Buchnera aphidicola subsp. Acyrthosiphon pisum (strain APS) (Acyrthosiphon pisum symbiotic bacterium).